The chain runs to 146 residues: Single-stranded DNA-binding protein, mitochondrial (146 aa).

Residues 1–22 (MQHTRRMLNPLLTGLRNLPARG) constitute a mitochondrion transit peptide. The SSB domain maps to 38-142 (VNTVTILGRV…IIADDVLFFR (105 aa)).

In terms of assembly, homotetramer. In terms of tissue distribution, uniformly distributed in the early embryo. High levels detected in the anterior and posterior midgut primordia of stage 12 embryos. In larvae, high levels were detected in proliferating tissues including the CNS and digestive tract. In adults, highly expressed in the CNS, digestive tract and ovary.

The protein resides in the mitochondrion. Its function is as follows. Binds preferentially and cooperatively to pyrimidine rich single-stranded DNA (ss-DNA). Required to maintain the copy number of mitochondrial DNA (mtDNA) and plays crucial roles during mtDNA replication that stimulate activity of the gamma complex polymerase PolG1/tam at the replication fork. Promotes PolG1 activity largely by organizing the template DNA and eliminating secondary structures to favor ss-DNA conformations that facilitate PolG1 activity. In Drosophila melanogaster (Fruit fly), this protein is Single-stranded DNA-binding protein, mitochondrial (mtSSB).